The following is an 836-amino-acid chain: MDGPRSDMGRSDVSRSDMSRSDMGRSDMGRSDVGRCGGGPLQPSATPSPEPEPEPEPEPDRGSRSRGGRGRSFWARCCGCCSCRNAADDDWGREPSDSRDRGSSSRGGRPDSRGGGVNAAGDGTIREGMLVVTGVDLLSSRSDQNRREHHTDEFEYEELIVRRGQPFHLVLFLSRPYESSDRIALELQIGNNPEVGKGTHVIIPVGKGNSGGWKAQVTKASGQTLNLRVHSPASAIIGKFQFTVRTRTEAGEFQLPFDPRNEIYILFNPWCPEDIVYVDHEDWRQDYVLNESGRIYYGTEAQIGERTWNYGQFDHGVLDACLYILDRRGMPYGGRGDPVSVSRVISAMVNSLDDNGVLIGNWSGDYSRGTNPSAWVGSVEILLSYLRTGYSVPYGQCWVFAGVTTTVLRCLGLATRTVTNFNSAHDTDTSLTMDIYFDENMKPLEHLNRDSVWNFHVWNDCWMKRPDLPSGFDGWQVVDATPQETSSGIFCCGPCSVESVKNGLVYMKYDTPFIFAEVNSDKVYWQRQDDGSFKIVYVEEKAIGTLIVTKAVRSHMREDITHIYKHPEGSDAERKAVETAAAHGSKPNVYDSRDSAEDVAMQVEAQDAVMGQDLTVSVVLTNRSSSRRTVKLHLYLSVTFYTGVTGSIFKESKKEVVLAAGSSDSVVMPVAYKEYRPHLVDQGAMLLNVSGHVKESGQVLAKQHTFRVRTPDLSLTLLGAAVVGQECEVQIVFRNPLPITLTNVVFRLEGSGLQRPKILNVGDIGGNETVTLRQTFVPVRPGPRQLIASLDSPQLSQVHGVIQVDVAPASGGRGFLHAGGDSYSGETIPMTSRGEA.

A compositionally biased stretch (basic and acidic residues) spans 1–33 (MDGPRSDMGRSDVSRSDMSRSDMGRSDMGRSDV). 2 disordered regions span residues 1-68 (MDGP…SRGG) and 89-125 (DDWGREPSDSRDRGSSSRGGRPDSRGGGVNAAGDGTI). T46 is subject to Phosphothreonine. 3 positions are modified to phosphoserine: S48, S98, and S112. Basic and acidic residues predominate over residues 89 to 112 (DDWGREPSDSRDRGSSSRGGRPDS). Catalysis depends on residues C397, H456, and D479. Ca(2+) contacts are provided by N519, D521, E568, and E573. At S824 the chain carries Phosphoserine.

The protein belongs to the transglutaminase superfamily. Transglutaminase family. In terms of assembly, interacts with PLAAT4. The cofactor is Ca(2+). Post-translationally, palmitoylated. The membrane anchorage region possesses a cluster of five cysteines within which fatty acid(s) may become thioester-linked. It is subject to phorbol ester-stimulated phosphorylation and is hypersensitive to proteolysis, which releases the enzyme in a soluble form. In terms of processing, tyrosine-phosphorylated.

It localises to the membrane. The enzyme catalyses L-glutaminyl-[protein] + L-lysyl-[protein] = [protein]-L-lysyl-N(6)-5-L-glutamyl-[protein] + NH4(+). Its activity is regulated as follows. Inhibited by retinoic acid, but phorbol ester treatment activates it. In terms of biological role, catalyzes the cross-linking of proteins and the conjugation of polyamines to proteins. Responsible for cross-linking epidermal proteins during formation of the stratum corneum. Involved in cell proliferation. The sequence is that of Protein-glutamine gamma-glutamyltransferase K (TGM1) from Oryctolagus cuniculus (Rabbit).